The sequence spans 377 residues: Nitric oxide reductase FlRd-NAD(+) reductase (377 aa).

The protein belongs to the FAD-dependent oxidoreductase family. FAD is required as a cofactor.

The protein localises to the cytoplasm. The catalysed reaction is 2 reduced [nitric oxide reductase rubredoxin domain] + NAD(+) + H(+) = 2 oxidized [nitric oxide reductase rubredoxin domain] + NADH. It functions in the pathway nitrogen metabolism; nitric oxide reduction. Its function is as follows. One of at least two accessory proteins for anaerobic nitric oxide (NO) reductase. Reduces the rubredoxin moiety of NO reductase. This Escherichia coli O45:K1 (strain S88 / ExPEC) protein is Nitric oxide reductase FlRd-NAD(+) reductase.